Reading from the N-terminus, the 726-residue chain is Fatty acid oxidation complex subunit alpha (726 aa).

Positions 1 to 189 are enoyl-CoA hydratase/isomerase; that stretch reads MIYQGENLSV…KIGMVDGIVS (189 aa). Position 296 (D296) interacts with substrate. Positions 311-726 are 3-hydroxyacyl-CoA dehydrogenase; that stretch reads EPVKNAAVLG…PKSSVSSPSV (416 aa). Residues M324, D343, 400-402, K407, and S429 contribute to the NAD(+) site; that span reads VVE. H450 serves as the catalytic For 3-hydroxyacyl-CoA dehydrogenase activity. NAD(+) is bound at residue N453. Residues N500 and Y660 each contribute to the substrate site.

It in the N-terminal section; belongs to the enoyl-CoA hydratase/isomerase family. In the C-terminal section; belongs to the 3-hydroxyacyl-CoA dehydrogenase family. In terms of assembly, heterotetramer of two alpha chains (FadB) and two beta chains (FadA).

The catalysed reaction is a (3S)-3-hydroxyacyl-CoA + NAD(+) = a 3-oxoacyl-CoA + NADH + H(+). It catalyses the reaction a (3S)-3-hydroxyacyl-CoA = a (2E)-enoyl-CoA + H2O. The enzyme catalyses a 4-saturated-(3S)-3-hydroxyacyl-CoA = a (3E)-enoyl-CoA + H2O. It carries out the reaction (3S)-3-hydroxybutanoyl-CoA = (3R)-3-hydroxybutanoyl-CoA. The catalysed reaction is a (3Z)-enoyl-CoA = a 4-saturated (2E)-enoyl-CoA. It catalyses the reaction a (3E)-enoyl-CoA = a 4-saturated (2E)-enoyl-CoA. It participates in lipid metabolism; fatty acid beta-oxidation. Its function is as follows. Involved in the aerobic and anaerobic degradation of long-chain fatty acids via beta-oxidation cycle. Catalyzes the formation of 3-oxoacyl-CoA from enoyl-CoA via L-3-hydroxyacyl-CoA. It can also use D-3-hydroxyacyl-CoA and cis-3-enoyl-CoA as substrate. In Aliivibrio salmonicida (strain LFI1238) (Vibrio salmonicida (strain LFI1238)), this protein is Fatty acid oxidation complex subunit alpha.